Reading from the N-terminus, the 340-residue chain is Ketol-acid reductoisomerase (NADP(+)) (340 aa).

One can recognise a KARI N-terminal Rossmann domain in the interval 1 to 183 (MAITVYYDKD…GGGRTGIIET (183 aa)). Residues 26–29 (FGSQ), Arg-49, Ser-52, Ser-54, and 84–87 (DEIQ) each bind NADP(+). His-109 is an active-site residue. Gly-135 is a binding site for NADP(+). Residues 184-329 (TFKAETETDL…RNLRAMMPWI (146 aa)) enclose the KARI C-terminal knotted domain. Mg(2+)-binding residues include Asp-192, Glu-196, Glu-228, and Glu-232. Ser-253 contributes to the substrate binding site.

It belongs to the ketol-acid reductoisomerase family. Mg(2+) is required as a cofactor.

It catalyses the reaction (2R)-2,3-dihydroxy-3-methylbutanoate + NADP(+) = (2S)-2-acetolactate + NADPH + H(+). It carries out the reaction (2R,3R)-2,3-dihydroxy-3-methylpentanoate + NADP(+) = (S)-2-ethyl-2-hydroxy-3-oxobutanoate + NADPH + H(+). The protein operates within amino-acid biosynthesis; L-isoleucine biosynthesis; L-isoleucine from 2-oxobutanoate: step 2/4. Its pathway is amino-acid biosynthesis; L-valine biosynthesis; L-valine from pyruvate: step 2/4. Functionally, involved in the biosynthesis of branched-chain amino acids (BCAA). Catalyzes an alkyl-migration followed by a ketol-acid reduction of (S)-2-acetolactate (S2AL) to yield (R)-2,3-dihydroxy-isovalerate. In the isomerase reaction, S2AL is rearranged via a Mg-dependent methyl migration to produce 3-hydroxy-3-methyl-2-ketobutyrate (HMKB). In the reductase reaction, this 2-ketoacid undergoes a metal-dependent reduction by NADPH to yield (R)-2,3-dihydroxy-isovalerate. This chain is Ketol-acid reductoisomerase (NADP(+)), found in Campylobacter jejuni subsp. jejuni serotype O:2 (strain ATCC 700819 / NCTC 11168).